A 93-amino-acid polypeptide reads, in one-letter code: Integration host factor subunit beta (93 aa).

It belongs to the bacterial histone-like protein family. As to quaternary structure, heterodimer of an alpha and a beta chain.

Its function is as follows. This protein is one of the two subunits of integration host factor, a specific DNA-binding protein that functions in genetic recombination as well as in transcriptional and translational control. The polypeptide is Integration host factor subunit beta (Rhodospirillum centenum (strain ATCC 51521 / SW)).